The sequence spans 424 residues: Protein FAM43A (424 aa).

The segment covering 261–297 (QQEEELQEEEEEHLEDCLEEEEEEDGVGDGDPAEEEA) has biased composition (acidic residues). Disordered regions lie at residues 261 to 299 (QQEE…EAEA) and 382 to 424 (LLSG…PYSG). A compositionally biased stretch (low complexity) spans 382–394 (LLSGESTGSESSI). The span at 405–418 (SPGNPSGPADSTSL) shows a compositional bias: polar residues.

The protein belongs to the FAM43 family.

The chain is Protein FAM43A (Fam43a) from Mus musculus (Mouse).